The sequence spans 250 residues: Octanoyltransferase (250 aa).

In terms of domain architecture, BPL/LPL catalytic spans 44 to 224 (GAGSDRLLLL…AVVQALNGDL (181 aa)). Residues 82 to 89 (RGGKITWH), 154 to 156 (AIG), and 167 to 169 (GIS) each bind substrate. Cys-185 acts as the Acyl-thioester intermediate in catalysis. The tract at residues 224 to 250 (LPVRDHDLPRPGTTPAAPNSTRVRSMT) is disordered. Residues 239–250 (AAPNSTRVRSMT) are compositionally biased toward polar residues.

Belongs to the LipB family.

It localises to the cytoplasm. The enzyme catalyses octanoyl-[ACP] + L-lysyl-[protein] = N(6)-octanoyl-L-lysyl-[protein] + holo-[ACP] + H(+). The protein operates within protein modification; protein lipoylation via endogenous pathway; protein N(6)-(lipoyl)lysine from octanoyl-[acyl-carrier-protein]: step 1/2. In terms of biological role, catalyzes the transfer of endogenously produced octanoic acid from octanoyl-acyl-carrier-protein onto the lipoyl domains of lipoate-dependent enzymes. Lipoyl-ACP can also act as a substrate although octanoyl-ACP is likely to be the physiological substrate. This is Octanoyltransferase from Nocardia farcinica (strain IFM 10152).